Here is a 773-residue protein sequence, read N- to C-terminus: Histone-lysine N-methyltransferase mes-2 (773 aa).

Over residues 1–13 the composition is skewed to polar residues; sequence MSNSEPSTSTPSG. The segment at 1–33 is disordered; that stretch reads MSNSEPSTSTPSGKTKKRGKKCETSMGKSKKSK. The tract at residues 1-194 is interaction with mes-6; sequence MSNSEPSTST…TPDQLRLTHM (194 aa). The CXC domain occupies 505-614; the sequence is IREDDMRDSQ…SNIIKCRNFG (110 aa). One can recognise an SET domain in the interval 616-737; that stretch reads TRMIQKRTYC…ISEELTFDYS (122 aa). Residues 749–773 form a disordered region; the sequence is VQTKERSEKPSRPKSQKLSKPMTSE. Over residues 750–759 the composition is skewed to basic and acidic residues; it reads QTKERSEKPS.

The protein belongs to the class V-like SAM-binding methyltransferase superfamily. Histone-lysine methyltransferase family. EZ subfamily. In terms of assembly, interacts directly with mes-6 via its N-terminal domain. Forms a heterotrimeric complex with mes-3 and mes-6. Does not interact with mes-4. In terms of tissue distribution, in adults, it is predominantly expressed in the germline, and weakly expressed in intestinal cells. Expressed in the hypoderm.

Its subcellular location is the nucleus. The enzyme catalyses L-lysyl(27)-[histone H3] + 3 S-adenosyl-L-methionine = N(6),N(6),N(6)-trimethyl-L-lysyl(27)-[histone H3] + 3 S-adenosyl-L-homocysteine + 3 H(+). In terms of biological role, polycomb group (PcG) protein. Catalytic subunit of a the mes-2/mes-3/mes-6 complex, which methylates 'Lys-27' of histone H3, leading to transcriptional repression of the affected target genes. PcG proteins act by forming multiprotein complexes, which are required to maintain the transcriptionally repressive state of homeotic genes throughout development. In association with the nfya-1-NF-Y complex, may play a role in repressing the expression of the homeobox protein egl-5 in tissues such as the head. PcG proteins are not required to initiate repression, but to maintain it during later stages of development. The mes-2/mes-3/mes-6 complex may participate in the global inactivation of the X chromosomes in germline cells. This complex is required to exclude mes-4 from the inactivated X-chromosomes in germline cells. Required for small-RNA-induced H3K27 trimethylation. Involved in the negative regulation of lifespan in a germline-independent fashion. This chain is Histone-lysine N-methyltransferase mes-2, found in Caenorhabditis elegans.